Here is a 608-residue protein sequence, read N- to C-terminus: Protein trichome birefringence (608 aa).

Residues 38 to 58 form a helical; Signal-anchor for type II membrane protein membrane-spanning segment; sequence TFAYAFVITFVSFTLFFAFSP. Polar residues-rich tracts occupy residues 101 to 137 and 145 to 203; these read STKP…QTPA and AKNT…TSPA. The segment at 101 to 236 is disordered; the sequence is STKPTNRSSD…TPKKQTKTVD (136 aa). Residues 215-227 show a composition bias toward low complexity; it reads TNSSSNSSTASST. Residues 328–330 carry the GDS motif motif; the sequence is GDS. Residues 573 to 587 carry the DCXHWCLPGXXDXWN motif motif; sequence DCSHWCLPGVPDSWN.

The protein belongs to the PC-esterase family. TBL subfamily. Expressed in leaf vasculature, growing part of the root, expanding inflorescence stems and trichomes.

It localises to the membrane. Functionally, required during cellulose deposition. May act as a bridging protein that binds pectin and other cell wall polysaccharides. Probably involved in maintaining esterification of pectins. May be involved in the specific O-acetylation of cell wall polymers. The chain is Protein trichome birefringence (TBR) from Arabidopsis thaliana (Mouse-ear cress).